The chain runs to 92 residues: Small ribosomal subunit protein uS19 (92 aa).

The protein belongs to the universal ribosomal protein uS19 family.

Functionally, protein S19 forms a complex with S13 that binds strongly to the 16S ribosomal RNA. The polypeptide is Small ribosomal subunit protein uS19 (Psychromonas ingrahamii (strain DSM 17664 / CCUG 51855 / 37)).